Here is a 1242-residue protein sequence, read N- to C-terminus: MDFLPTQVFYGRRWRPRMPPRPWRPRMPTMQRPDQQARQMQQLIAAVSTLALRQNAAAPQRGKKKQPRRKKPKPQPEKPKKQEQKPKQKKAPKRKPGRRERMCMKIEHDCIFEVKHEGKVTGYACLVGDKVMKPAHVPGVIDNADLARLSYKKSSKYDLECAQIPVAMKSDASKYTHEKPEGHYNWHYGAVQYTGGRFTVPTGVGKPGDSGRPIFDNKGPVVAIVLGGANEGTRTALSVVTWNKDMVTKITPEGTVEWAASTVTAMCLLTNISFPCFQPSCAPCCYEKGPEPTLRMLEENVNSEGYYDLLHAAVYCRNSSRSKRSTANHFNAYKLTRPYVAYCADCGMGHSCHSPAMIENIQADATDGTLKIQFASQIGLTKTDTHDHTKIRYAEGHDIAEAARSTLKVHSSSECTVTGTMGHFILAKCPPGERISVSFVDSKNEHRTCRIAYHHEQRLIGRERFTVRPHHGIELPCTTYQLTTAETSEEIDMHMPPDIPDRTILSQQSGNVKITVNGRTVRYSSSCGSQAVGTTTTDKTINSCTVDKCQAYVTSHTKWQFNSPFVPRRMQAERKGKVHIPFPLINTTCRVPLAPEALVRSGKREATLSLHPIHPTLLSYRTFGAERVFDEQWITAQTEVTIPVPVEGVEYQWGNHKPQRFVVALTTEGKAHGWPHEIIEYYYGLHPTTTIVVVIRVSVVVLLSFAASVYMCVVARTKCLTPYALTPGAVVPVTIGVLCCAPKAHAASFAEGMAYLWDNNQSMFWMELTGPLALLILATCCARSLLSCCKGSFLVAMSIGSAVASAYEHTAIIPNQVGFPYKAHVAREGYSPLTLQMQVIETSLEPTLNLEYITCDYKTKVPSPYVKCCGTAECRTQDKPEYKCAVFTGVYPFMWGGAYCFCDSENTQMSEAYVERADVCKHDHAAAYRAHTASLRAKIKVTYGTVNQTVEAYVNGDHAVTIAGTKFIFGPVSTPWTPFDTKILVYKGELYNQDFPRYGAGQPGRFGDIQSRTLDSRDLYANTGLKLARPAAGNIHVPYTQTPSGFKTWQKDRDSPLNAKAPFGCIIQTNPVRAMNCAVGNIPVSMDIADSAFTRLTDAPVISELTCTVSTCTHSSDFGGIAVLSYKVEKSGRCDIHSHSNVAVLQEVSIETEGRSVIHFSTASASPSFVVSVCSSRATCTAKCEPPKDHVVTYPANHNGVTLPDLSSTAMTWAQHLAGGVGLLIALAVLILVIVTCVTLRR.

The disordered stretch occupies residues 14-101; the sequence is WRPRMPPRPW…PKRKPGRRER (88 aa). The span at 26–42 shows a compositional bias: low complexity; it reads RMPTMQRPDQQARQMQQ. A host transcription inhibition region spans residues 35-66; sequence QQARQMQQLIAAVSTLALRQNAAAPQRGKKKQ. Positions 59–96 match the Nuclear localization signal motif; sequence PQRGKKKQPRRKKPKPQPEKPKKQEQKPKQKKAPKRKP. Residues 61-73 show a composition bias toward basic residues; that stretch reads RGKKKQPRRKKPK. Residues 74 to 86 are compositionally biased toward basic and acidic residues; that stretch reads PQPEKPKKQEQKP. The tract at residues 82–111 is binding to the viral RNA; that stretch reads QEQKPKQKKAPKRKPGRRERMCMKIEHDCI. A compositionally biased stretch (basic residues) spans 87–98; it reads KQKKAPKRKPGR. The ribosome-binding stretch occupies residues 96-110; the sequence is PGRRERMCMKIEHDC. An intrachain disulfide couples C110 to C125. In terms of domain architecture, Peptidase S3 spans 110–258; it reads CIFEVKHEGK…KITPEGTVEW (149 aa). H136 acts as the Charge relay system in catalysis. Positions 141-151 match the Nuclear export signal motif; it reads IDNADLARLSY. An interaction with spike glycoprotein E2 region spans residues 152 to 157; it reads KKSSKY. The Charge relay system role is filled by D158. Residues 180–190 form a dimerization of the capsid protein region; the sequence is PEGHYNWHYGA. S210 (charge relay system) is an active-site residue. Residues 216–220 are dimerization of the capsid protein; sequence DNKGP. The tract at residues 259-272 is functions as an uncleaved signal peptide for the precursor of protein E3/E2; the sequence is AASTVTAMCLLTNI. 8 disulfides stabilise this stretch: C267–C276, C281–C285, C284–C316, C343–C449, C346–C352, C415–C429, C477–C589, and C527–C544. N271 is a glycosylation site (N-linked (GlcNAc...) asparagine; by host). The Extracellular portion of the chain corresponds to 325–690; the sequence is STANHFNAYK…YYYGLHPTTT (366 aa). 2 interaction with host Mxra8 receptor regions span residues 350–353 and 386–388; these read HSCH and HDH. Interaction with host Mxra8 receptor regions lie at residues 508–511 and 540–546; these read QSGN and TINSCTV. N-linked (GlcNAc...) asparagine; by host glycosylation occurs at N586. A helical transmembrane segment spans residues 691–711; sequence IVVVIRVSVVVLLSFAASVYM. Residues 712 to 746 are Cytoplasmic-facing; that stretch reads CVVARTKCLTPYALTPGAVVPVTIGVLCCAPKAHA. The interaction with the capsid protein stretch occupies residues 714-718; sequence VARTK. 3 S-palmitoyl cysteine; by host lipidation sites follow: C719, C739, and C740. The tract at residues 719–739 is transient transmembrane before p62-6K protein processing; the sequence is CLTPYALTPGAVVPVTIGVLC. C719 and C740 are oxidised to a cystine. Residues 747–761 are Extracellular-facing; sequence ASFAEGMAYLWDNNQ. Residue N760 is glycosylated (N-linked (GlcNAc...) asparagine; by host). A helical transmembrane segment spans residues 762–782; sequence SMFWMELTGPLALLILATCCA. Residues 783 to 785 lie on the Cytoplasmic side of the membrane; the sequence is RSL. Residues 786–806 form a helical membrane-spanning segment; it reads LSCCKGSFLVAMSIGSAVASA. The Extracellular portion of the chain corresponds to 807–1217; that stretch reads YEHTAIIPNQ…STAMTWAQHL (411 aa). Cystine bridges form between C855/C920, C868/C900, C869/C902, and C874/C884. The segment at 890–907 is E1 fusion peptide loop; it reads VYPFMWGGAYCFCDSENT. N947 and N1076 each carry an N-linked (GlcNAc...) asparagine; by host glycan. Cystine bridges form between C1065–C1077, C1107–C1180, C1112–C1184, and C1134–C1174. Residues 1218–1238 traverse the membrane as a helical segment; the sequence is AGGVGLLIALAVLILVIVTCV. C1237 carries S-palmitoyl cysteine; by host lipidation. At 1239 to 1242 the chain is on the cytoplasmic side; sequence TLRR.

In terms of assembly, homodimer. Homomultimer. Interacts with host karyopherin KPNA4; this interaction allows the nuclear import of the viral capsid protein. Interacts with spike glycoprotein E2. Interacts with host IRAK1; the interaction leads to inhibition of IRAK1-dependent signaling. The precursor of protein E3/E2 and E1 form a heterodimer shortly after synthesis. As to quaternary structure, the precursor of protein E3/E2 and E1 form a heterodimer shortly after synthesis. Processing of the precursor of protein E3/E2 into E2 and E3 results in a heterodimer of the spike glycoproteins E2 and E1. Spike at virion surface are constituted of a trimer of E2-E1 heterodimers. After target cell attachment and endocytosis, E1 change conformation to form homotrimers. Interacts with 6K protein. In terms of assembly, interacts with spike glycoprotein E1. Processing of the precursor of protein E3/E2 into E2 and E3 results in a heterodimer of the spike glycoproteins E2 and E1. Spike at virion surface are constituted of a trimer of E2-E1 heterodimers. Interacts with 6K protein. Interacts with host MXRA8; this interaction mediates virus entry. Oligomer. Interacts with spike glycoprotein E1. Interacts with spike glycoprotein E2. Structural polyprotein: Specific enzymatic cleavages in vivo yield mature proteins. Capsid protein is auto-cleaved during polyprotein translation, unmasking a signal peptide at the N-terminus of the precursor of E3/E2. The remaining polyprotein is then targeted to the host endoplasmic reticulum, where host signal peptidase cleaves it into pE2, 6K and E1 proteins. pE2 is further processed to mature E3 and E2 by host furin in trans-Golgi vesicle. In terms of processing, palmitoylated via thioester bonds. These palmitoylations may induce disruption of the C-terminus transmembrane. This would result in the reorientation of E2 C-terminus from lumenal to cytoplasmic side. Post-translationally, N-glycosylated. Palmitoylated via thioester bonds.

The protein localises to the virion. It is found in the host cytoplasm. Its subcellular location is the host cell membrane. The protein resides in the host nucleus. It localises to the virion membrane. The protein localises to the host Golgi apparatus. It is found in the host trans-Golgi network. Its subcellular location is the host endoplasmic reticulum. The catalysed reaction is Autocatalytic release of the core protein from the N-terminus of the togavirus structural polyprotein by hydrolysis of a -Trp-|-Ser- bond.. In terms of biological role, forms an icosahedral capsid with a T=4 symmetry composed of 240 copies of the capsid protein surrounded by a lipid membrane through which penetrate 80 spikes composed of trimers of E1-E2 heterodimers. The capsid protein binds to the viral RNA genome at a site adjacent to a ribosome binding site for viral genome translation following genome release. Possesses a protease activity that results in its autocatalytic cleavage from the nascent structural protein. Following its self-cleavage, the capsid protein transiently associates with ribosomes, and within several minutes the protein binds to viral RNA and rapidly assembles into icosahedric core particles. The resulting nucleocapsid eventually associates with the cytoplasmic domain of the spike glycoprotein E2 at the cell membrane, leading to budding and formation of mature virions. In case of infection, new virions attach to target cells and after clathrin-mediated endocytosis their membrane fuses with the host endosomal membrane. This leads to the release of the nucleocapsid into the cytoplasm, followed by an uncoating event necessary for the genomic RNA to become accessible. The uncoating might be triggered by the interaction of capsid proteins with ribosomes. Binding of ribosomes would release the genomic RNA since the same region is genomic RNA-binding and ribosome-binding. Specifically inhibits interleukin-1 receptor-associated kinase 1/IRAK1-dependent signaling during viral entry, representing a means by which the alphaviruses may evade innate immune detection and activation prior to viral gene expression. Its function is as follows. Provides the signal sequence for the translocation of the precursor of protein E3/E2 to the host endoplasmic reticulum. Furin-cleaved E3 remains associated with spike glycoprotein E1 and mediates pH protection of the latter during the transport via the secretory pathway. After virion release from the host cell, the assembly protein E3 is gradually released in the extracellular space. Plays a role in viral attachment to target host cell, by binding to the cell receptor MXRA8. Synthesized as a p62 precursor which is processed by furin at the cell membrane just before virion budding, giving rise to E2-E1 heterodimer. The p62-E1 heterodimer is stable, whereas E2-E1 is unstable and dissociate at low pH. p62 is processed at the last step, presumably to avoid E1 fusion activation before its final export to cell surface. E2 C-terminus contains a transitory transmembrane that would be disrupted by palmitoylation, resulting in reorientation of the C-terminal tail from lumenal to cytoplasmic side. This step is critical since E2 C-terminus is involved in budding by interacting with capsid proteins. This release of E2 C-terminus in cytoplasm occurs lately in protein export, and precludes premature assembly of particles at the endoplasmic reticulum membrane. Functionally, acts as a viroporin that participates in virus glycoprotein processing and transport to the plasma membrane, cell permeabilization and budding of viral particles. Disrupts the calcium homeostasis of the cell, probably at the endoplasmic reticulum level. This leads to cytoplasmic calcium elevation. Because of its lipophilic properties, the 6K protein is postulated to influence the selection of lipids that interact with the transmembrane domains of the glycoproteins, which, in turn, affects the deformability of the bilayer required for the extreme curvature that occurs as budding proceeds. Present in low amount in virions, about 3% compared to viral glycoproteins. In terms of biological role, class II viral fusion protein. Fusion activity is inactive as long as E1 is bound to E2 in mature virion. After virus attachment to target cell via host MXRA8 and endocytosis, acidification of the endosome induce dissociation of E1/E2 heterodimer and concomitant trimerization of the E1 subunits. This E1 trimer is fusion active, and promotes release of viral nucleocapsid in cytoplasm after endosome and viral membrane fusion. Efficient fusion requires the presence of cholesterol and sphingolipid in the target membrane. This is Structural polyprotein from Mayaro virus (strain Brazil) (MAYV).